A 109-amino-acid chain; its full sequence is Thiosulfate sulfurtransferase GlpE (109 aa).

Positions 16–104 (REQGAVVVDI…WRTTYPAEIS (89 aa)) constitute a Rhodanese domain. C64 (cysteine persulfide intermediate) is an active-site residue.

Belongs to the GlpE family.

The protein localises to the cytoplasm. The enzyme catalyses thiosulfate + hydrogen cyanide = thiocyanate + sulfite + 2 H(+). The catalysed reaction is thiosulfate + [thioredoxin]-dithiol = [thioredoxin]-disulfide + hydrogen sulfide + sulfite + 2 H(+). In terms of biological role, transferase that catalyzes the transfer of sulfur from thiosulfate to thiophilic acceptors such as cyanide or dithiols. May function in a CysM-independent thiosulfate assimilation pathway by catalyzing the conversion of thiosulfate to sulfite, which can then be used for L-cysteine biosynthesis. The polypeptide is Thiosulfate sulfurtransferase GlpE (Pseudomonas fluorescens (strain SBW25)).